Reading from the N-terminus, the 571-residue chain is Proline--tRNA ligase (571 aa).

This sequence belongs to the class-II aminoacyl-tRNA synthetase family. ProS type 1 subfamily. Homodimer.

The protein localises to the cytoplasm. It catalyses the reaction tRNA(Pro) + L-proline + ATP = L-prolyl-tRNA(Pro) + AMP + diphosphate. Catalyzes the attachment of proline to tRNA(Pro) in a two-step reaction: proline is first activated by ATP to form Pro-AMP and then transferred to the acceptor end of tRNA(Pro). As ProRS can inadvertently accommodate and process non-cognate amino acids such as alanine and cysteine, to avoid such errors it has two additional distinct editing activities against alanine. One activity is designated as 'pretransfer' editing and involves the tRNA(Pro)-independent hydrolysis of activated Ala-AMP. The other activity is designated 'posttransfer' editing and involves deacylation of mischarged Ala-tRNA(Pro). The misacylated Cys-tRNA(Pro) is not edited by ProRS. This chain is Proline--tRNA ligase, found in Pseudomonas putida (strain GB-1).